Here is a 129-residue protein sequence, read N- to C-terminus: UPF0325 protein YE3288 (129 aa).

The protein belongs to the UPF0325 family.

This Yersinia enterocolitica serotype O:8 / biotype 1B (strain NCTC 13174 / 8081) protein is UPF0325 protein YE3288.